A 91-amino-acid polypeptide reads, in one-letter code: Non-specific lipid-transfer protein 1 (91 aa).

Cystine bridges form between Cys3–Cys50, Cys13–Cys27, Cys28–Cys73, and Cys48–Cys87.

It belongs to the plant LTP family.

Functionally, plant non-specific lipid-transfer proteins transfer phospholipids as well as galactolipids across membranes. May play a role in wax or cutin deposition in the cell walls of expanding epidermal cells and certain secretory tissues. In Prunus armeniaca (Apricot), this protein is Non-specific lipid-transfer protein 1.